Here is an 80-residue protein sequence, read N- to C-terminus: Large ribosomal subunit protein bL31B (80 aa).

The protein belongs to the bacterial ribosomal protein bL31 family. Type B subfamily. As to quaternary structure, part of the 50S ribosomal subunit.

The polypeptide is Large ribosomal subunit protein bL31B (Xanthomonas campestris pv. campestris (strain 8004)).